A 443-amino-acid polypeptide reads, in one-letter code: Trigger factor (443 aa).

The 86-residue stretch at 165-250 folds into the PPIase FKBP-type domain; that stretch reads GDQIVMDFLG…VKEVKKPVPA (86 aa).

It belongs to the FKBP-type PPIase family. Tig subfamily.

Its subcellular location is the cytoplasm. It catalyses the reaction [protein]-peptidylproline (omega=180) = [protein]-peptidylproline (omega=0). Functionally, involved in protein export. Acts as a chaperone by maintaining the newly synthesized protein in an open conformation. Functions as a peptidyl-prolyl cis-trans isomerase. This chain is Trigger factor, found in Roseobacter denitrificans (strain ATCC 33942 / OCh 114) (Erythrobacter sp. (strain OCh 114)).